A 503-amino-acid polypeptide reads, in one-letter code: Maturase K (503 aa).

The protein belongs to the intron maturase 2 family. MatK subfamily.

It is found in the plastid. Its subcellular location is the chloroplast. Functionally, usually encoded in the trnK tRNA gene intron. Probably assists in splicing its own and other chloroplast group II introns. This is Maturase K from Rosa canina (Dog rose).